The chain runs to 39 residues: uncharacterized protein (39 aa).

The first 21 residues, 1–21, serve as a signal peptide directing secretion; that stretch reads MHLRSRWWLALLYCKDPVSRS.

This is an uncharacterized protein from Saccharomyces cerevisiae (strain ATCC 204508 / S288c) (Baker's yeast).